A 563-amino-acid polypeptide reads, in one-letter code: Quinidine resistance protein 1 (563 aa).

Residues 1–10 are compositionally biased toward polar residues; that stretch reads MTKQQTSVMR. The tract at residues 1–50 is disordered; sequence MTKQQTSVMRNASIAKEEREGSDNNNVDRSSSDAISDNDAERSNSHSEID. The Cytoplasmic portion of the chain corresponds to 1–75; it reads MTKQQTSVMR…KQKMLLVVQC (75 aa). Residues 23 to 33 are compositionally biased toward low complexity; it reads DNNNVDRSSSD. The segment covering 39–49 has biased composition (basic and acidic residues); that stretch reads DAERSNSHSEI. The chain crosses the membrane as a helical span at residues 76–96; it reads AFTGFFSTVAGSIYYPVLTII. Over 97 to 108 the chain is Extracellular; that stretch reads ERKFNITEELAN. Residues 109–129 traverse the membrane as a helical segment; the sequence is VTIVVYFIFQGVAPSIMGGLA. The Cytoplasmic segment spans residues 130 to 135; the sequence is DTFGRR. A helical membrane pass occupies residues 136–156; that stretch reads PIVLWAILAYFCACIGLACAH. Over 157–165 the chain is Extracellular; that stretch reads NYAQILALR. Residues 166-186 traverse the membrane as a helical segment; sequence CLQAAGISPVIAINSGIMGDV. The Cytoplasmic segment spans residues 187-195; it reads TTKVERGGY. Residues 196-216 traverse the membrane as a helical segment; the sequence is VGLVAGFQVVGTAFGALIGAG. At 217–224 the chain is on the extracellular side; sequence LSSKWGWR. A helical transmembrane segment spans residues 225–245; sequence AIFWFLAIGSGICLVFSTLLM. Topologically, residues 246 to 296 are cytoplasmic; it reads PETKRTLVGNGSVTPRSFLNRSLILHVGSVKKTLHLDDPDPETLEPRTSVD. A helical transmembrane segment spans residues 297–317; the sequence is FLAPLKILHIREIDILLSIAG. The Extracellular segment spans residues 318–341; that stretch reads LQFSTWTTHQTALTIVLSKKYNLS. A helical transmembrane segment spans residues 342–362; that stretch reads VAKIGLCFLPAGISTLTSIIS. At 363 to 421 the chain is on the cytoplasmic side; that stretch reads AGRYLNWSYRTRKVKYNRWIKEQELQLMEKYKGDKNKVAELIHSNSHYAFNLVEARLHP. A helical membrane pass occupies residues 422-442; that stretch reads AFVTLLLSSIGFTAFGWCISV. Residues 443-445 lie on the Extracellular side of the membrane; sequence KTP. The helical transmembrane segment at 446–466 threads the bilayer; sequence LAAVLCTSAFASLFSNCILTF. The Cytoplasmic portion of the chain corresponds to 467–481; that stretch reads STTLIVDLFPSKAST. Residues 482-502 form a helical membrane-spanning segment; the sequence is ATGCLNLFRCLLSAIFIAALT. The Extracellular segment spans residues 503–511; the sequence is KMVEKMRYG. Residues 512-532 form a helical membrane-spanning segment; that stretch reads GVFTFLSAITSSSSLLLFYLL. The Cytoplasmic portion of the chain corresponds to 533–563; sequence KNGKQLSFDRIRANDKSAGRSVGKNSEKVST.

It belongs to the major facilitator superfamily. CAR1 family.

The protein localises to the cell membrane. Multidrug resistance transporter involved in resistance and adaptation to quinidine and ketoconazole. This chain is Quinidine resistance protein 1 (QDR1), found in Saccharomyces cerevisiae (strain ATCC 204508 / S288c) (Baker's yeast).